Here is a 631-residue protein sequence, read N- to C-terminus: MNYETLASEIRDGVGGQENIISVIHCATRLRFKLRDNTNANADALKNNPGIIMVVESGGQFQVVVGNQVADVYQALLSLDGMARFSDSAAPEEEKKNSLFSGFIDIISSIFTPFVGVMAATGILKGFLALGVATHVISESSGTYKLLFAASDALFYFFPIVLGYTAGKKFGGNPFTTLVIGATLVHPSMIAAFNAMQAPDHSTLHFLGIPITFINYSSSVIPILFASWVSCKLEKPLNRWLHANIRNFFTPLLCIVISVPLTFLLIGPSATWLSQMLAGGYQWLYGLNSLLAGAVMGALWQVCVIFGLHWGFVPLMLNNFSVIGHDTLLPLLVPAVLGQAGATLGVLLRTQDLKRKGIAGSAFSAAIFGITEPAVYGVTLPLRRPFIFGCIGGALGAAVMGYAHTTMYSFGFPSIFSFTQVIPPTGVDSSVWAAVIGTLLAFAFAALTSWSFGVPKDETQPAAADSPAVLAETQANAGAVRDETLFSPLAGEVLLLEQVADRTFASGVMGKGIAIRPTQGRLYAPVDGTVASLFKTHHAIGLASRGGAEVLIHVGIDTVRLDGRYFTPHVRVGDVVRQGDLLLEFDGPAIEAAGYDLTTPIVITNSEDYRGVEPVASGKVDANAPLTQLVC.

The PTS EIIB type-1 domain maps to 1-86 (MNYETLASEI…LSLDGMARFS (86 aa)). Residue C26 is the Phosphocysteine intermediate; for EIIB activity of the active site. A PTS EIIC type-1 domain is found at 105-466 (DIISSIFTPF…DETQPAAADS (362 aa)). 10 helical membrane passes run 120 to 140 (ATGI…ISES), 146 to 166 (LLFA…GYTA), 175 to 195 (FTTL…AFNA), 206 to 226 (FLGI…ILFA), 248 to 268 (FFTP…LIGP), 295 to 315 (VMGA…FVPL), 328 to 348 (LLPL…GVLL), 358 to 378 (IAGS…VYGV), 385 to 405 (PFIF…YAHT), and 434 to 454 (AVIG…SFGV). The PTS EIIA type-1 domain occupies 501–605 (DRTFASGVMG…DLTTPIVITN (105 aa)). H553 (tele-phosphohistidine intermediate; for EIIA activity) is an active-site residue.

The protein localises to the cell inner membrane. Functionally, the phosphoenolpyruvate-dependent sugar phosphotransferase system (sugar PTS), a major carbohydrate active -transport system, catalyzes the phosphorylation of incoming sugar substrates concomitantly with their translocation across the cell membrane. This system is involved in beta-glucoside transport. Acts both as a kinase and as a phosphatase on ArbG. This chain is PTS system beta-glucoside-specific EIIBCA component (arbF), found in Dickeya chrysanthemi (Pectobacterium chrysanthemi).